The primary structure comprises 472 residues: 3-isopropylmalate dehydratase large subunit (472 aa).

Positions 353, 414, and 417 each coordinate [4Fe-4S] cluster.

The protein belongs to the aconitase/IPM isomerase family. LeuC type 1 subfamily. As to quaternary structure, heterodimer of LeuC and LeuD. [4Fe-4S] cluster is required as a cofactor.

The enzyme catalyses (2R,3S)-3-isopropylmalate = (2S)-2-isopropylmalate. Its pathway is amino-acid biosynthesis; L-leucine biosynthesis; L-leucine from 3-methyl-2-oxobutanoate: step 2/4. Functionally, catalyzes the isomerization between 2-isopropylmalate and 3-isopropylmalate, via the formation of 2-isopropylmaleate. This is 3-isopropylmalate dehydratase large subunit from Acinetobacter baumannii (strain AB0057).